We begin with the raw amino-acid sequence, 558 residues long: Glypican-1 (558 aa).

A signal peptide spans 1–23 (MELRARGWWLLCAAAALVACARG). 7 cysteine pairs are disulfide-bonded: C32/C68, C62/C256, C69/C259, C191/C343, C246/C279, C268/C415, and C272/C401. N-linked (GlcNAc...) asparagine glycans are attached at residues N79 and N116. The disordered stretch occupies residues 341-374 (QGCGNPKVNPQGPGPEEKRRRGKLAPRERPPSGT). A compositionally biased stretch (basic and acidic residues) spans 355 to 370 (PEEKRRRGKLAPRERP). O-linked (Xyl...) (heparan sulfate) serine glycans are attached at residues S486, S488, and S490. The interval 505–534 (RKSSSSRTPLTHALPGLSEQEGQKTSAASC) is disordered. The GPI-anchor amidated serine moiety is linked to residue S530. A propeptide spans 531–558 (AASCPQPPTFLLPLLLFLALTVARPRWR) (removed in mature form).

It belongs to the glypican family. In terms of processing, S-nitrosylated in a Cu(2+)-dependent manner. Nitric acid (NO) is released from the nitrosylated cysteines by ascorbate or by some other reducing agent, in a Cu(2+) or Zn(2+) dependent manner. This free nitric oxide is then capable of cleaving the heparan sulfate side chains. Post-translationally, N- and O-glycosylated. N-glycosylation is mainly of the complex type containing sialic acid. O-glycosylated with heparan sulfate. The heparan sulfate chains can be cleaved either by the action of heparanase or, degraded by a deaminative process that uses nitric oxide (NO) released from the S-nitrosylated cysteines. This process is triggered by ascorbate, or by some other reducing agent, in a Cu(2+)- or Zn(2+) dependent manner. Cu(2+) ions are provided by ceruloproteins such as APP, PRNP or CP which associate with GCP1 in intracellular compartments or lipid rafts. This cell-associated glypican is further processed to give rise to a medium-released species.

The protein resides in the cell membrane. The protein localises to the endosome. Its subcellular location is the secreted. It is found in the extracellular space. Cell surface proteoglycan that bears heparan sulfate. Binds, via the heparan sulfate side chains, alpha-4 (V) collagen and participates in Schwann cell myelination. May act as a catalyst in increasing the rate of conversion of prion protein PRPN(C) to PRNP(Sc) via associating (via the heparan sulfate side chains) with both forms of PRPN, targeting them to lipid rafts and facilitating their interaction. Required for proper skeletal muscle differentiation by sequestering FGF2 in lipid rafts preventing its binding to receptors (FGFRs) and inhibiting the FGF-mediated signaling. This chain is Glypican-1 (GPC1), found in Homo sapiens (Human).